We begin with the raw amino-acid sequence, 72 residues long: Probable neurotoxin pcD-993 (72 aa).

Positions 1–19 (MNYLVMISFALLLVIGVES) are cleaved as a signal peptide. Residues 21–72 (RDGYFVEPDNCVVHCMPSSEMCDRGCKHNGATSGSCKAFSKGGNACWCKGLR) form the LCN-type CS-alpha/beta domain. Cystine bridges form between cysteine 35/cysteine 56, cysteine 42/cysteine 66, and cysteine 46/cysteine 68. Residue arginine 72 is a propeptide, removed by a carboxypeptidase.

This sequence belongs to the long (3 C-C) scorpion toxin superfamily. As to expression, expressed by the venom gland.

It is found in the secreted. The protein is Probable neurotoxin pcD-993 of Androctonus australis (Sahara scorpion).